The sequence spans 219 residues: MGFKGAWNKRNRLIENPEEYYRLYKKLQRAYKLVREAIKRYGSFELLKGKTSLRDLEELLEERKQVLENLKKQLREAHKGKPKIEAEGDEQLKELIREVNRVQSEVRALEIITNRVRKYEEIYAQYKQMTEKKAYVDPKLWMRIRKMNEAGERKVVRTYSRATTIIPEFVGHTIAVHNGKTFIPVYITQDMVGHKLGEFAPTRTFKGHPDKTAKVVKKK.

A unknown region spans residues 1–128 (MGFKGAWNKR…YEEIYAQYKQ (128 aa)). The tract at residues 129 to 219 (MTEKKAYVDP…DKTAKVVKKK (91 aa)) is small ribosomal subunit protein uS19.

This sequence belongs to the universal ribosomal protein uS19 family.

Protein S19 forms a complex with S13 that binds strongly to the 16S ribosomal RNA. The protein is Small ribosomal subunit protein uS19 of Aquifex pyrophilus.